Here is a 207-residue protein sequence, read N- to C-terminus: Outer-membrane lipoprotein LolB (207 aa).

The N-terminal stretch at 1–21 (MTLPDFRLIRLLPLASLVLTA) is a signal peptide. Residue C22 is the site of N-palmitoyl cysteine attachment. C22 carries S-diacylglycerol cysteine lipidation.

The protein belongs to the LolB family. Monomer.

The protein localises to the cell outer membrane. Its function is as follows. Plays a critical role in the incorporation of lipoproteins in the outer membrane after they are released by the LolA protein. The sequence is that of Outer-membrane lipoprotein LolB from Citrobacter koseri (strain ATCC BAA-895 / CDC 4225-83 / SGSC4696).